A 121-amino-acid chain; its full sequence is Large ribosomal subunit protein bL12 (121 aa).

Belongs to the bacterial ribosomal protein bL12 family. Homodimer. Part of the ribosomal stalk of the 50S ribosomal subunit. Forms a multimeric L10(L12)X complex, where L10 forms an elongated spine to which 2 to 4 L12 dimers bind in a sequential fashion. Binds GTP-bound translation factors.

Its function is as follows. Forms part of the ribosomal stalk which helps the ribosome interact with GTP-bound translation factors. Is thus essential for accurate translation. In Lactobacillus delbrueckii subsp. bulgaricus (strain ATCC BAA-365 / Lb-18), this protein is Large ribosomal subunit protein bL12.